Consider the following 478-residue polypeptide: Stromelysin-1 (478 aa).

The first 17 residues, 1 to 17, serve as a signal peptide directing secretion; that stretch reads MKTLPTLLLLCVALCSA. Positions 18-100 are cleaved as a propeptide — activation peptide; it reads YPLDGASRDA…PRCGVPDVGH (83 aa). The Cysteine switch motif lies at 91–98; the sequence is PRCGVPDV. Cys-93 contributes to the Zn(2+) binding site. Asp-125 and Asp-159 together coordinate Ca(2+). The Zn(2+) site is built by His-169 and Asp-171. Residues Asp-176, Gly-177, Gly-179, and Val-181 each coordinate Ca(2+). Position 184 (His-184) interacts with Zn(2+). Positions 191, 193, and 195 each coordinate Ca(2+). His-197 contacts Zn(2+). Ca(2+) contacts are provided by Asp-199, Asp-200, and Glu-202. His-219 contributes to the Zn(2+) binding site. Residue Glu-220 is part of the active site. Positions 223 and 229 each coordinate Zn(2+). Hemopexin repeat units lie at residues 288-337, 338-384, 386-434, and 435-478; these read PVMC…WPSL, PSAV…GFPS, IRKI…FPGI, and NPKI…WFQC. Cys-291 and Cys-478 are joined by a disulfide. Asp-298 contributes to the Ca(2+) binding site. Asp-390 and Asp-439 together coordinate Ca(2+).

The protein belongs to the peptidase M10A family. It depends on Ca(2+) as a cofactor. The cofactor is Zn(2+).

The protein resides in the secreted. The protein localises to the extracellular space. It is found in the extracellular matrix. The catalysed reaction is Preferential cleavage where P1', P2' and P3' are hydrophobic residues.. Metalloproteinase with a rather broad substrate specificity that can degrade fibronectin, laminin, gelatins of type I, III, IV, and V; collagens III, IV, X, and IX, and cartilage proteoglycans. Activates different molecules including growth factors, plasminogen or other matrix metalloproteinases such as MMP9. Once released into the extracellular matrix (ECM), the inactive pro-enzyme is activated by the plasmin cascade signaling pathway. Also acts intracellularly. For example, in dopaminergic neurons, gets activated by the serine protease HTRA2 upon stress and plays a pivotal role in DA neuronal degeneration by mediating microglial activation and alpha-synuclein/SNCA cleavage. In addition, plays a role in immune response and possesses antiviral activity against various viruses. Mechanistically, translocates from the cytoplasm into the cell nucleus upon virus infection to influence NF-kappa-B activities. This chain is Stromelysin-1 (MMP3), found in Oryctolagus cuniculus (Rabbit).